Reading from the N-terminus, the 444-residue chain is Glucoside xylosyltransferase 2 (444 aa).

At 1-4 (MKLR) the chain is on the cytoplasmic side. Residues 5–25 (SKAAALLLLALAVLLLALLSL) form a helical; Signal-anchor for type II membrane protein membrane-spanning segment. At 26–444 (RARRDPEPPG…IIHMGPNPMS (419 aa)) the chain is on the lumenal side. Positions 31 to 101 (PEPPGFPARP…LARRPGETRS (71 aa)) are disordered. Residues 68–83 (RSPRRQPPRLRPRAGR) are compositionally biased toward basic residues. Basic and acidic residues predominate over residues 87–101 (ASREKLARRPGETRS). N275 is a glycosylation site (N-linked (GlcNAc...) asparagine).

It belongs to the glycosyltransferase 8 family.

It is found in the membrane. The enzyme catalyses 3-O-(beta-D-glucosyl)-L-seryl-[EGF-like domain protein] + UDP-alpha-D-xylose = 3-O-[alpha-D-xylosyl-(1-&gt;3)-beta-D-glucosyl]-L-seryl-[EGF-like domain protein] + UDP + H(+). Glycosyltransferase which elongates the O-linked glucose attached to EGF-like repeats in the extracellular domain of Notch proteins by catalyzing the addition of xylose. This Mus musculus (Mouse) protein is Glucoside xylosyltransferase 2 (Gxylt2).